The chain runs to 240 residues: Protein FANTASTIC FOUR 2 (240 aa).

2 disordered regions span residues 89 to 124 (TTPR…PPIK) and 177 to 229 (LLSH…KPML). The 55-residue stretch at 117 to 171 (NSFPPPIKFVEDSKYNRMVRWLGEDGRIVVQAIRVSSPPSCFVSERGEGRLRLIL) folds into the FAF domain. Residues 184–200 (EEEEEETEEGIDEETSE) show a composition bias toward acidic residues. The span at 207 to 216 (GNKKFSRFSR) shows a compositional bias: basic residues. Residues 217 to 226 (RCKENGREPK) are compositionally biased toward basic and acidic residues.

It belongs to the fantastic four family. Expressed in the shoot apex, stamens, carpels and young siliques. Detected in provascular and vascular tissue, and in the center of the vegetative and inflorescence meristems. Expressed in the funiculus. In roots and leaves, predominantly expressed in phloem.

Functionally, regulates the size of the shoot meristem by modulating the CLV3-WUS feedback loop. Can repress WUS but is under negative control by CLV3. The sequence is that of Protein FANTASTIC FOUR 2 (FAF2) from Arabidopsis thaliana (Mouse-ear cress).